The following is a 52-amino-acid chain: MRIKVGLKCEECGDINYSTYKNSKNTTEKLELKKYCPRLKKHTFHKEVKLKS.

Belongs to the bacterial ribosomal protein bL33 family.

The protein is Large ribosomal subunit protein bL33 of Campylobacter jejuni subsp. doylei (strain ATCC BAA-1458 / RM4099 / 269.97).